The following is a 285-amino-acid chain: Tyrosine recombinase XerA (285 aa).

A Core-binding (CB) domain is found at Ile-7–Gly-84. Positions Ser-100–Glu-274 constitute a Tyr recombinase domain. Active-site residues include Arg-135, Lys-160, His-226, Arg-229, and His-252. Tyr-261 (O-(3'-phospho-DNA)-tyrosine intermediate) is an active-site residue.

Belongs to the 'phage' integrase family. XerA subfamily.

Its subcellular location is the cytoplasm. Functionally, site-specific tyrosine recombinase, which acts by catalyzing the cutting and rejoining of the recombining DNA molecules. The chain is Tyrosine recombinase XerA from Pyrococcus horikoshii (strain ATCC 700860 / DSM 12428 / JCM 9974 / NBRC 100139 / OT-3).